A 100-amino-acid polypeptide reads, in one-letter code: NADH-quinone oxidoreductase subunit K 2 (100 aa).

3 helical membrane-spanning segments follow: residues 4 to 24, 28 to 48, and 60 to 80; these read LWWH…GVLL, ILVV…NFIA, and IFAI…LGIL.

The protein belongs to the complex I subunit 4L family. As to quaternary structure, NDH-1 is composed of 14 different subunits. Subunits NuoA, H, J, K, L, M, N constitute the membrane sector of the complex.

The protein localises to the cell inner membrane. The enzyme catalyses a quinone + NADH + 5 H(+)(in) = a quinol + NAD(+) + 4 H(+)(out). In terms of biological role, NDH-1 shuttles electrons from NADH, via FMN and iron-sulfur (Fe-S) centers, to quinones in the respiratory chain. The immediate electron acceptor for the enzyme in this species is believed to be ubiquinone. Couples the redox reaction to proton translocation (for every two electrons transferred, four hydrogen ions are translocated across the cytoplasmic membrane), and thus conserves the redox energy in a proton gradient. In Sinorhizobium fredii (strain NBRC 101917 / NGR234), this protein is NADH-quinone oxidoreductase subunit K 2.